Reading from the N-terminus, the 127-residue chain is Large ribosomal subunit protein bL20 (127 aa).

The protein belongs to the bacterial ribosomal protein bL20 family.

Its function is as follows. Binds directly to 23S ribosomal RNA and is necessary for the in vitro assembly process of the 50S ribosomal subunit. It is not involved in the protein synthesizing functions of that subunit. This chain is Large ribosomal subunit protein bL20, found in Corynebacterium jeikeium (strain K411).